The primary structure comprises 688 residues: ERI1 exoribonuclease 2 (688 aa).

The Exonuclease domain maps to Leu-37–Ala-226. 3 residues coordinate Mg(2+): Asp-41, Glu-43, and Asp-156. Residue Glu-43 is the Proton acceptor of the active site. Glu-43 provides a ligand contact to AMP. Catalysis depends on His-213, which acts as the Proton acceptor. His-213 lines the AMP pocket. Asp-218 contacts Mg(2+). Over residues Val-337–Leu-360 the composition is skewed to polar residues. 2 disordered regions span residues Val-337–Lys-367 and Asp-523–Gln-546. Zn(2+) is bound by residues Cys-594, Cys-596, Cys-619, and Cys-631. The segment at Cys-594–Leu-640 adopts a GRF-type zinc-finger fold.

The protein belongs to the ERI2 family. The cofactor is Mg(2+).

The sequence is that of ERI1 exoribonuclease 2 (Eri2) from Mus musculus (Mouse).